The following is a 355-amino-acid chain: MPVLHNRVSNEELKARMLAETEPRTTVSFYKYFTIDDPKAFRDRLYIQLEQYKVFGRIYIAAEGINAQISVPNNQFDAFKTGLFSAHPALDQIRLNIALEDDGKSFWVLRMKVRERIVADGIDDPTFNPANVGQYLKADRVNAMADDPDTVFVDMRNHYEYEVGHFQNALEVPSDTFREQLPMAVDMLDDIRDKNIVMYCTGGIRCEKASAYMLHHGFKNVYHVEGGIIEYARQAKAQGLPLKFIGKNFVFDERMGERISDDVIAHCHQCGASCDSHTNCRNEGCHLLFIQCPSCAAKYEGCCSTQCQDEMKLPLEEQRAIRSGRENGMKIFNKSKGLLQSTLHIPAPAAKDNAE.

Positions 146–240 constitute a Rhodanese domain; it reads DDPDTVFVDM…YARQAKAQGL (95 aa). Cysteine 200 functions as the Cysteine persulfide intermediate in the catalytic mechanism.

This sequence belongs to the TrhO family.

The enzyme catalyses uridine(34) in tRNA + AH2 + O2 = 5-hydroxyuridine(34) in tRNA + A + H2O. In terms of biological role, catalyzes oxygen-dependent 5-hydroxyuridine (ho5U) modification at position 34 in tRNAs. In Pectobacterium atrosepticum (strain SCRI 1043 / ATCC BAA-672) (Erwinia carotovora subsp. atroseptica), this protein is tRNA uridine(34) hydroxylase.